The primary structure comprises 440 residues: Phosphatidylcholine-sterol acyltransferase (440 aa).

The N-terminal stretch at 1 to 24 (MGLPGSPWQWVLLLLGLLLPPATS) is a signal peptide. N-linked (GlcNAc...) asparagine glycosylation is present at asparagine 44. Cysteines 74 and 98 form a disulfide. Asparagine 108 is a glycosylation site (N-linked (GlcNAc...) asparagine). The active-site Nucleophile is serine 205. A glycan (N-linked (GlcNAc...) asparagine) is linked at asparagine 296. An intrachain disulfide couples cysteine 337 to cysteine 380. Aspartate 369 acts as the Charge relay system in catalysis. Asparagine 397 is a glycosylation site (N-linked (GlcNAc...) asparagine). Histidine 401 (charge relay system) is an active-site residue. N-linked (GlcNAc...) asparagine glycosylation is present at asparagine 408.

It belongs to the AB hydrolase superfamily. Lipase family. Detected in blood plasma (at protein level).

It is found in the secreted. It catalyses the reaction a sterol + a 1,2-diacyl-sn-glycero-3-phosphocholine = a sterol ester + a 1-acyl-sn-glycero-3-phosphocholine. It carries out the reaction a 1-O-alkyl-2-acetyl-sn-glycero-3-phosphocholine + H2O = a 1-O-alkyl-sn-glycero-3-phosphocholine + acetate + H(+). The catalysed reaction is 1-hexadecanoyl-2-(9Z,12Z-octadecadienoyl)-sn-glycero-3-phosphocholine + H2O = (9Z,12Z)-octadecadienoate + 1-hexadecanoyl-sn-glycero-3-phosphocholine + H(+). The enzyme catalyses 1-hexadecanoyl-2-(5Z,8Z,11Z,14Z-eicosatetraenoyl)-sn-glycero-3-phosphocholine + H2O = 1-hexadecanoyl-sn-glycero-3-phosphocholine + (5Z,8Z,11Z,14Z)-eicosatetraenoate + H(+). It catalyses the reaction 1-hexadecanoyl-2-(5Z,8Z,11Z,14Z-eicosatetraenoyl)-sn-glycero-3-phosphocholine + cholesterol = cholesteryl (5Z,8Z,11Z,14Z)-eicosatetraenoate + 1-hexadecanoyl-sn-glycero-3-phosphocholine. It carries out the reaction 1-hexadecanoyl-2-(9Z-octadecenoyl)-sn-glycero-3-phosphocholine + cholesterol = cholesteryl (9Z-octadecenoate) + 1-hexadecanoyl-sn-glycero-3-phosphocholine. The catalysed reaction is a 1-hexadecanoyl-2-acyl-sn-glycero-3-phosphocholine + (24S)-hydroxycholesterol = (24S)-24-hydroxycholesterol ester + 1-hexadecanoyl-sn-glycero-3-phosphocholine. The enzyme catalyses (24S)-hydroxycholesterol + 1-hexadecanoyl-2-(9Z,12Z-octadecadienoyl)-sn-glycero-3-phosphocholine = (24S)-hydroxycholesterol 3-linoleoate + 1-hexadecanoyl-sn-glycero-3-phosphocholine. It catalyses the reaction 1-hexadecanoyl-2-(8Z,11Z,14Z-eicosatrienoyl)-sn-glycero-3-phosphocholine + cholesterol = cholesteryl (8Z,11Z,14Z)-eicosatrienoate + 1-hexadecanoyl-sn-glycero-3-phosphocholine. It carries out the reaction 1-hexadecanoyl-2-(5Z,8Z,11Z-eicosatrienoyl)-sn-glycero-3-phosphocholine + cholesterol = cholesteryl (5Z,8Z,11Z)-eicosatrienoate + 1-hexadecanoyl-sn-glycero-3-phosphocholine. The catalysed reaction is 1-hexadecanoyl-2-(5Z,8Z,11Z,14Z,17Z-eicosapentaenoyl)-sn-glycero-3-phosphocholine + cholesterol = (5Z,8Z,11Z,14Z,17Z-eicosapentaenoyl)-cholesterol + 1-hexadecanoyl-sn-glycero-3-phosphocholine. The enzyme catalyses 1-hexadecanoyl-2-(9Z,12Z-octadecadienoyl)-sn-glycero-3-phosphocholine + cholesterol = cholesteryl (9Z,12Z)-octadecadienoate + 1-hexadecanoyl-sn-glycero-3-phosphocholine. It catalyses the reaction 1-hexadecanoyl-2-(6Z,9Z,12Z-octadecatrienoyl)-sn-glycero-3-phosphocholine + cholesterol = (6Z,9Z,12Z-octadecatrienoyl)-cholesterol + 1-hexadecanoyl-sn-glycero-3-phosphocholine. It carries out the reaction 1-hexadecanoyl-2-(11Z,14Z,17Z-eicosatrienoyl)-sn-glycero-3-phosphocholine + cholesterol = (11Z,14Z,17Z-eicosatrienoyl)-cholesterol + 1-hexadecanoyl-sn-glycero-3-phosphocholine. The catalysed reaction is 1-hexadecanoyl-2-(9Z,12Z,15Z-octadecatrienoyl)-sn-glycero-3-phosphocholine + cholesterol = (9Z,12Z,15Z-octadecatrienoyl)-cholesterol + 1-hexadecanoyl-sn-glycero-3-phosphocholine. The enzyme catalyses a 1-O-alkyl-2-acetyl-sn-glycero-3-phosphocholine + 1-hexadecanoyl-sn-glycero-3-phosphocholine = 1-hexadecanoyl-2-acetyl-sn-glycero-3-phosphocholine + a 1-O-alkyl-sn-glycero-3-phosphocholine. In terms of biological role, central enzyme in the extracellular metabolism of plasma lipoproteins. Synthesized mainly in the liver and secreted into plasma where it converts cholesterol and phosphatidylcholines (lecithins) to cholesteryl esters and lysophosphatidylcholines on the surface of high and low density lipoproteins (HDLs and LDLs). The cholesterol ester is then transported back to the liver. Also produced in the brain by primary astrocytes, and esterifies free cholesterol on nascent APOE-containing lipoproteins secreted from glia and influences cerebral spinal fluid (CSF) APOE- and APOA1 levels. Together with APOE and the cholesterol transporter ABCA1, plays a key role in the maturation of glial-derived, nascent lipoproteins. Required for remodeling high-density lipoprotein particles into their spherical forms. Has a preference for plasma 16:0-18:2 or 18:O-18:2 phosphatidylcholines. Catalyzes the hydrolysis of 1-O-alkyl-2-acetyl-sn-glycero-3-phosphocholine (platelet-activating factor or PAF) to 1-O-alkyl-sn-glycero-3-phosphocholine (lyso-PAF). Also catalyzes the transfer of the acetate group from PAF to 1-hexadecanoyl-sn-glycero-3-phosphocholine forming lyso-PAF. Catalyzes the esterification of (24S)-hydroxycholesterol (24(S)OH-C), also known as cerebrosterol to produce 24(S)OH-C monoesters. In Rattus norvegicus (Rat), this protein is Phosphatidylcholine-sterol acyltransferase (Lcat).